The primary structure comprises 368 residues: MNESGSIGIIETKYAEFKELPLKNGSVLSPVVIAYETYGTLSPSKNNAILICHALSGDAHAAGYHSESDKKPGWWDDYIGPGKSFDTNQYFIICSNVIGGCKGSSGPLSIHPKTGTPYGSRFPFVSIQDMVKAQKLLVEFLGIDKLFCVAGGSMGGMQALEWSIAYPDSLLNCIVMASTAEHSAMQIAFNEVGRQAILSDPNWNNGLYDENSPRKGLALARMVGHITYLSDDKMREKFGRNPPRGNILTTDFAVGSYLIYQGESFVDRFDANSYIYVTKALDHYSLGKGKELTAALSTATCRFLIVSYSSDWLYPPAQSREIVKSLEAADKRVFYLELQSGEGHDSFLLKNPKQIEILKGFLENQSSP.

In terms of domain architecture, AB hydrolase-1 spans 47-349 (NAILICHALS…SGEGHDSFLL (303 aa)). Ser153 functions as the Nucleophile in the catalytic mechanism. Arg221 contributes to the substrate binding site. Active-site residues include Asp311 and His344. Asp345 contributes to the substrate binding site.

It belongs to the AB hydrolase superfamily. MetX family. Homodimer.

It localises to the cytoplasm. It carries out the reaction L-homoserine + acetyl-CoA = O-acetyl-L-homoserine + CoA. It functions in the pathway amino-acid biosynthesis; L-methionine biosynthesis via de novo pathway; O-acetyl-L-homoserine from L-homoserine: step 1/1. In terms of biological role, transfers an acetyl group from acetyl-CoA to L-homoserine, forming acetyl-L-homoserine. This is Homoserine O-acetyltransferase from Leptospira borgpetersenii serovar Hardjo-bovis (strain JB197).